The sequence spans 147 residues: Small ribosomal subunit protein bS6 (147 aa).

The tract at residues 107–147 (KEGRERKARPARAERRDDTEAEDLSDEEGVEAEDFEEEQGV) is disordered. Residues 125–147 (TEAEDLSDEEGVEAEDFEEEQGV) are compositionally biased toward acidic residues.

Belongs to the bacterial ribosomal protein bS6 family.

Functionally, binds together with bS18 to 16S ribosomal RNA. This Cellvibrio japonicus (strain Ueda107) (Pseudomonas fluorescens subsp. cellulosa) protein is Small ribosomal subunit protein bS6.